We begin with the raw amino-acid sequence, 97 residues long: Co-chaperonin GroES (97 aa).

The protein belongs to the GroES chaperonin family. Heptamer of 7 subunits arranged in a ring. Interacts with the chaperonin GroEL.

The protein resides in the cytoplasm. Together with the chaperonin GroEL, plays an essential role in assisting protein folding. The GroEL-GroES system forms a nano-cage that allows encapsulation of the non-native substrate proteins and provides a physical environment optimized to promote and accelerate protein folding. GroES binds to the apical surface of the GroEL ring, thereby capping the opening of the GroEL channel. This is Co-chaperonin GroES from Buchnera aphidicola subsp. Cinara cedri (strain Cc).